Consider the following 151-residue polypeptide: Protein InSETG-4 (151 aa).

It localises to the cytoplasm. It is found in the cytosol. In Homo sapiens (Human), this protein is Protein InSETG-4 (InSet4-G).